An 83-amino-acid polypeptide reads, in one-letter code: FMRFamide-like neuropeptide 23 (83 aa).

An N-terminal signal peptide occupies residues 1 to 24; it reads MLLPKISILLYILVVLQETAAVRG. The propeptide occupies 25–36; the sequence is ALFRSGRAVPFE. Residue Phe-47 is modified to Phenylalanine amide. The propeptide occupies 50–83; that stretch reads AGMASGVGGGSEGGPDDVKNSYIRVNGEPEIVYQ.

This sequence belongs to the FARP (FMRFamide related peptide) family. In terms of tissue distribution, each flp gene is expressed in a distinct set of neurons.

The protein localises to the secreted. Functionally, FMRFamides and FMRFamide-like peptides are neuropeptides. This is FMRFamide-like neuropeptide 23 (flp-23) from Caenorhabditis elegans.